We begin with the raw amino-acid sequence, 206 residues long: Putative precorrin-2 dehydrogenase (206 aa).

NAD(+) is bound by residues 20-21 (SV) and 41-46 (KEFDEE).

The protein belongs to the precorrin-2 dehydrogenase / sirohydrochlorin ferrochelatase family. In terms of assembly, homodimer.

It catalyses the reaction precorrin-2 + NAD(+) = sirohydrochlorin + NADH + 2 H(+). Its pathway is porphyrin-containing compound metabolism; siroheme biosynthesis; sirohydrochlorin from precorrin-2: step 1/1. Its function is as follows. Involved in the archaeal biosynthesis of heme. Catalyzes the oxiation of precorrin-2 into sirohydroclorin. This is Putative precorrin-2 dehydrogenase from Methanocaldococcus jannaschii (strain ATCC 43067 / DSM 2661 / JAL-1 / JCM 10045 / NBRC 100440) (Methanococcus jannaschii).